Consider the following 872-residue polypeptide: Alanine--tRNA ligase (872 aa).

Residues His-561, His-565, Cys-662, and His-666 each contribute to the Zn(2+) site.

Belongs to the class-II aminoacyl-tRNA synthetase family. The cofactor is Zn(2+).

Its subcellular location is the cytoplasm. The enzyme catalyses tRNA(Ala) + L-alanine + ATP = L-alanyl-tRNA(Ala) + AMP + diphosphate. Catalyzes the attachment of alanine to tRNA(Ala) in a two-step reaction: alanine is first activated by ATP to form Ala-AMP and then transferred to the acceptor end of tRNA(Ala). Also edits incorrectly charged Ser-tRNA(Ala) and Gly-tRNA(Ala) via its editing domain. The polypeptide is Alanine--tRNA ligase (Thiobacillus denitrificans (strain ATCC 25259 / T1)).